The chain runs to 440 residues: 3-phosphoshikimate 1-carboxyvinyltransferase (440 aa).

The 3-phosphoshikimate site is built by K19, S20, and R24. Phosphoenolpyruvate is bound at residue K19. Residues G92 and R121 each coordinate phosphoenolpyruvate. 3-phosphoshikimate is bound by residues S166, Q168, D315, and K342. Residue Q168 coordinates phosphoenolpyruvate. Catalysis depends on D315, which acts as the Proton acceptor. Residues R346 and R399 each coordinate phosphoenolpyruvate.

This sequence belongs to the EPSP synthase family. In terms of assembly, monomer.

It is found in the cytoplasm. It catalyses the reaction 3-phosphoshikimate + phosphoenolpyruvate = 5-O-(1-carboxyvinyl)-3-phosphoshikimate + phosphate. It participates in metabolic intermediate biosynthesis; chorismate biosynthesis; chorismate from D-erythrose 4-phosphate and phosphoenolpyruvate: step 6/7. Its function is as follows. Catalyzes the transfer of the enolpyruvyl moiety of phosphoenolpyruvate (PEP) to the 5-hydroxyl of shikimate-3-phosphate (S3P) to produce enolpyruvyl shikimate-3-phosphate and inorganic phosphate. The protein is 3-phosphoshikimate 1-carboxyvinyltransferase of Leptospira interrogans serogroup Icterohaemorrhagiae serovar copenhageni (strain Fiocruz L1-130).